We begin with the raw amino-acid sequence, 612 residues long: Sulfite reductase [NADPH] hemoprotein beta-component (612 aa).

A disordered region spans residues 1-26; sequence MDDHKPIETPDGPAVDTPGIGARRYE. Cysteine 469, cysteine 475, cysteine 514, and cysteine 518 together coordinate [4Fe-4S] cluster. Cysteine 518 is a binding site for siroheme.

The protein belongs to the nitrite and sulfite reductase 4Fe-4S domain family. In terms of assembly, alpha(8)-beta(8). The alpha component is a flavoprotein, the beta component is a hemoprotein. Requires siroheme as cofactor. [4Fe-4S] cluster is required as a cofactor.

The enzyme catalyses hydrogen sulfide + 3 NADP(+) + 3 H2O = sulfite + 3 NADPH + 4 H(+). It participates in sulfur metabolism; hydrogen sulfide biosynthesis; hydrogen sulfide from sulfite (NADPH route): step 1/1. In terms of biological role, component of the sulfite reductase complex that catalyzes the 6-electron reduction of sulfite to sulfide. This is one of several activities required for the biosynthesis of L-cysteine from sulfate. The chain is Sulfite reductase [NADPH] hemoprotein beta-component from Methylorubrum extorquens (strain CM4 / NCIMB 13688) (Methylobacterium extorquens).